The sequence spans 74 residues: Neuropeptide-like protein 33 (74 aa).

A signal peptide spans 1–21; that stretch reads MISTSLLLVVLLFAILAIVDA. Tyr-72 carries the post-translational modification Tyrosine amide.

It belongs to the YARP (YGGW-amide related peptide) family. In terms of tissue distribution, expressed in hypoderm.

The protein localises to the secreted. In terms of biological role, may have antifungic activity against D.coniospora. This Caenorhabditis elegans protein is Neuropeptide-like protein 33 (nlp-33).